The primary structure comprises 265 residues: Zearalenone hydrolase (265 aa).

Residues glycine 35, serine 105, and serine 106 each coordinate zearalenone. The active site involves serine 105. Residue glutamate 129 is part of the active site. 3 residues coordinate zearalenone: tryptophan 185, tyrosine 189, and histidine 243. Histidine 243 is a catalytic residue.

Belongs to the AB hydrolase superfamily. Hydrolase RutD family. As to quaternary structure, homodimer.

It catalyses the reaction zearalenone + H2O = hydrolyzed zearalenone + H(+). Functionally, lactonohydrolase that specifically hydrolyzes zearalenone (ZEN), an oestrogenic mycotoxin produced by numerous Fusarium specie, into a non-toxic alkylresorcinol product. In Cladophialophora bantiana (strain ATCC 10958 / CDC1940 / 8579 / CBS 173.52) (Xylohypha bantiana), this protein is Zearalenone hydrolase.